The primary structure comprises 419 residues: Serine--tRNA ligase (419 aa).

Residue 226–228 coordinates L-serine; that stretch reads TSE. ATP contacts are provided by residues 257 to 259 and valine 273; that span reads RRE. L-serine is bound at residue glutamate 280. An ATP-binding site is contributed by 344–347; it reads ELTS. Threonine 379 provides a ligand contact to L-serine.

The protein belongs to the class-II aminoacyl-tRNA synthetase family. Type-1 seryl-tRNA synthetase subfamily. As to quaternary structure, homodimer. The tRNA molecule binds across the dimer.

It localises to the cytoplasm. It carries out the reaction tRNA(Ser) + L-serine + ATP = L-seryl-tRNA(Ser) + AMP + diphosphate + H(+). The enzyme catalyses tRNA(Sec) + L-serine + ATP = L-seryl-tRNA(Sec) + AMP + diphosphate + H(+). Its pathway is aminoacyl-tRNA biosynthesis; selenocysteinyl-tRNA(Sec) biosynthesis; L-seryl-tRNA(Sec) from L-serine and tRNA(Sec): step 1/1. Functionally, catalyzes the attachment of serine to tRNA(Ser). Is also able to aminoacylate tRNA(Sec) with serine, to form the misacylated tRNA L-seryl-tRNA(Sec), which will be further converted into selenocysteinyl-tRNA(Sec). The chain is Serine--tRNA ligase from Mycobacterium marinum (strain ATCC BAA-535 / M).